Here is a 296-residue protein sequence, read N- to C-terminus: Phosphoribosylaminoimidazole-succinocarboxamide synthase (296 aa).

The protein belongs to the SAICAR synthetase family.

The catalysed reaction is 5-amino-1-(5-phospho-D-ribosyl)imidazole-4-carboxylate + L-aspartate + ATP = (2S)-2-[5-amino-1-(5-phospho-beta-D-ribosyl)imidazole-4-carboxamido]succinate + ADP + phosphate + 2 H(+). The protein operates within purine metabolism; IMP biosynthesis via de novo pathway; 5-amino-1-(5-phospho-D-ribosyl)imidazole-4-carboxamide from 5-amino-1-(5-phospho-D-ribosyl)imidazole-4-carboxylate: step 1/2. This is Phosphoribosylaminoimidazole-succinocarboxamide synthase from Desulfotalea psychrophila (strain LSv54 / DSM 12343).